A 459-amino-acid polypeptide reads, in one-letter code: Glycosyl hydrolase family 109 protein 1 (459 aa).

A signal peptide (tat-type signal) is located at residues 1 to 31 (MHNIHRRHFLKAAGAVTAGLVTANIALNANA). Residues 64–65 (ER), Asp-86, 135–138 (WEWH), 155–156 (EV), and Asn-184 contribute to the NAD(+) site. Residues Tyr-213, Arg-232, 244 to 247 (YPTH), and Tyr-326 each bind substrate. NAD(+) is bound at residue Tyr-244.

It belongs to the Gfo/Idh/MocA family. Glycosyl hydrolase 109 subfamily. It depends on NAD(+) as a cofactor. Predicted to be exported by the Tat system. The position of the signal peptide cleavage has not been experimentally proven.

Glycosidase. The chain is Glycosyl hydrolase family 109 protein 1 from Shewanella sp. (strain MR-4).